The following is a 311-amino-acid chain: HTH-type transcriptional regulator DsdC (311 aa).

An HTH lysR-type domain is found at 15–72; it reads WQLSKMHTFEVAARHQSFALAAEELSLSPSAVSHRINQLEEELGIQLFVRSHRKVELT. The segment at residues 32-51 is a DNA-binding region (H-T-H motif); that stretch reads FALAAEELSLSPSAVSHRIN.

It belongs to the LysR transcriptional regulatory family.

Regulates the expression of the dsdX-dsdA operon. This Escherichia coli (strain K12) protein is HTH-type transcriptional regulator DsdC.